The following is a 313-amino-acid chain: Probable cell division protein WhiA (313 aa).

The segment at residues 277 to 311 (SLKEVAAQVPDGPISKSGVNHRFQKIREMAQQLKE) is a DNA-binding region (H-T-H motif).

This sequence belongs to the WhiA family.

In terms of biological role, involved in cell division and chromosome segregation. This chain is Probable cell division protein WhiA, found in Lactobacillus gasseri (strain ATCC 33323 / DSM 20243 / BCRC 14619 / CIP 102991 / JCM 1131 / KCTC 3163 / NCIMB 11718 / NCTC 13722 / AM63).